The following is a 102-amino-acid chain: Small ribosomal subunit protein uS10 (102 aa).

It belongs to the universal ribosomal protein uS10 family. Part of the 30S ribosomal subunit.

Involved in the binding of tRNA to the ribosomes. The chain is Small ribosomal subunit protein uS10 from Thermococcus kodakarensis (strain ATCC BAA-918 / JCM 12380 / KOD1) (Pyrococcus kodakaraensis (strain KOD1)).